The sequence spans 312 residues: Glyoxylate/hydroxypyruvate reductase A (312 aa).

R227 is an active-site residue. The active-site Proton donor is the H275.

Belongs to the D-isomer specific 2-hydroxyacid dehydrogenase family. GhrA subfamily.

Its subcellular location is the cytoplasm. The catalysed reaction is glycolate + NADP(+) = glyoxylate + NADPH + H(+). It catalyses the reaction (R)-glycerate + NAD(+) = 3-hydroxypyruvate + NADH + H(+). It carries out the reaction (R)-glycerate + NADP(+) = 3-hydroxypyruvate + NADPH + H(+). In terms of biological role, catalyzes the NADPH-dependent reduction of glyoxylate and hydroxypyruvate into glycolate and glycerate, respectively. This Klebsiella pneumoniae (strain 342) protein is Glyoxylate/hydroxypyruvate reductase A.